Consider the following 992-residue polypeptide: GATOR2 complex protein WDR59 (992 aa).

WD repeat units lie at residues 57–98, 103–143, 146–185, 189–229, 232–276, 278–318, and 319–362; these read QSKW…GEVG, GHTR…KPTV, SAVAGASQVKWNKKNANYLATSHDGDVRIWDKRKPSTAVE, AHLS…KYLN, PCQV…APVH, FVGH…RVDY, and QMQR…SLSH. The segment at 343–373 is disordered; that stretch reads PEPEKTPHPQDIDHQPSLSHGEEDAIKEDPP. The span at 344-373 shows a compositional bias: basic and acidic residues; it reads EPEKTPHPQDIDHQPSLSHGEEDAIKEDPP. The RWD domain occupies 393–494; the sequence is QEFSLINVQI…RQLVSCLESF (102 aa). Serine 564 carries the phosphoserine modification. Residues 660 to 706 form a WD 8 repeat; it reads KSLGELYILNVNDTQETCQKNATSAMLVGRKDLVQVWSLATVATDLC. Residues serine 839, serine 840, and serine 848 each carry the phosphoserine modification. Residues 849–870 are disordered; that stretch reads LTYSDPRERERDQHDKNKRLLD. Positions 853–869 are enriched in basic and acidic residues; that stretch reads DPRERERDQHDKNKRLL. The segment at 919–939 adopts a C4-type zinc-finger fold; it reads YCSHCRSEVRGTQCAICKGFT. Positions 920, 923, 932, 935, 945, 956, 961, 964, 967, 978, 982, 984, and 986 each coordinate Zn(2+). The segment at 940–989 adopts an RING-type; atypical zinc-finger fold; sequence FQCAICHVAVRGSSNFCLTCGHGGHTSHMMEWFRTQEVCPTGCGCHCLLE.

This sequence belongs to the WD repeat WDR59 family. In terms of assembly, component of the GATOR2 subcomplex, composed of MIOS, SEC13, SEH1L, WDR24 and WDR59. The GATOR2 complex interacts with CASTOR1 and CASTOR2; the interaction is negatively regulated by arginine. The GATOR2 complex interacts with SESN1, SESN2 and SESN3; the interaction is negatively regulated by amino acids. Interacts with DDB1-CUL4A/B E3 ligase complexes.

The protein resides in the lysosome membrane. Its activity is regulated as follows. The GATOR2 complex is negatively regulated by the upstream amino acid sensors CASTOR1 and SESN2, which sequester the GATOR2 complex in absence of amino acids. In the presence of abundant amino acids, GATOR2 is released from CASTOR1 and SESN2 and activated. Functionally, as a component of the GATOR2 complex, functions as an activator of the amino acid-sensing branch of the mTORC1 signaling pathway. The GATOR2 complex indirectly activates mTORC1 through the inhibition of the GATOR1 subcomplex. GATOR2 probably acts as an E3 ubiquitin-protein ligase toward GATOR1. In the presence of abundant amino acids, the GATOR2 complex mediates ubiquitination of the NPRL2 core component of the GATOR1 complex, leading to GATOR1 inactivation. In the absence of amino acids, GATOR2 is inhibited, activating the GATOR1 complex. In Mus musculus (Mouse), this protein is GATOR2 complex protein WDR59.